A 266-amino-acid polypeptide reads, in one-letter code: Large ribosomal subunit protein eL8 (266 aa).

Glycyl lysine isopeptide (Lys-Gly) (interchain with G-Cter in SUMO2) cross-links involve residues lysine 11, lysine 20, and lysine 21. Lysine 34 carries the post-translational modification N6-acetyllysine. Lysine 48 is covalently cross-linked (Glycyl lysine isopeptide (Lys-Gly) (interchain with G-Cter in SUMO2)). Residue lysine 97 is modified to N6-acetyllysine; alternate. Lysine 97 participates in a covalent cross-link: Glycyl lysine isopeptide (Lys-Gly) (interchain with G-Cter in SUMO2); alternate. Residue lysine 125 forms a Glycyl lysine isopeptide (Lys-Gly) (interchain with G-Cter in SUMO2) linkage. Lysine 217 carries the post-translational modification N6-acetyllysine. Lysine 245 is covalently cross-linked (Glycyl lysine isopeptide (Lys-Gly) (interchain with G-Cter in SUMO2)).

It belongs to the eukaryotic ribosomal protein eL8 family. As to quaternary structure, component of the large ribosomal subunit. Interacts with CRY1. Interacts with DICER1, AGO2, TARBP2, MOV10 and EIF6; they form a large RNA-induced silencing complex (RISC).

The protein resides in the cytoplasm. Component of the large ribosomal subunit. The ribosome is a large ribonucleoprotein complex responsible for the synthesis of proteins in the cell. In Rattus norvegicus (Rat), this protein is Large ribosomal subunit protein eL8 (Rpl7a).